Reading from the N-terminus, the 167-residue chain is Putative C-type lectin-like domain family 1 (167 aa).

The Cytoplasmic portion of the chain corresponds to 1–67 (MVSNFFHVIQ…KYDCPFSGTS (67 aa)). The helical; Signal-anchor for type II membrane protein transmembrane segment at 68–88 (FVVFSLFLICAMAGDVVYADI) threads the bilayer. Topologically, residues 89 to 167 (KTVRTSPLEL…DITAMVRFNI (79 aa)) are extracellular. 3 N-linked (GlcNAc...) asparagine glycosylation sites follow: Asn109, Asn140, and Asn149. One can recognise a C-type lectin; atypical domain in the interval 116 to 167 (SCPAKDWKVHKGKCYWIAETKKSWNKSQNDCAINNSYLMVIQDITAMVRFNI).

In terms of tissue distribution, expressed in spleen, lymph node, and tonsil. Lower expression in peripheral blood, bone marrow, and colon. No expression detected in thymus. Highly expressed in dendritic and B-cells.

The protein resides in the cell membrane. May function in mediating immune cell-cell interactions. May act as a T-cell costimulatory molecule, enhancing anti-CD3-induced proliferation. May play a role in the interaction of dendritic cells with T-cells and the cells of the adaptive immune response. This chain is Putative C-type lectin-like domain family 1, found in Homo sapiens (Human).